A 458-amino-acid polypeptide reads, in one-letter code: UDP-N-acetylmuramate--L-alanine ligase (458 aa).

Position 118 to 124 (118 to 124 (GTHGKTT)) interacts with ATP.

It belongs to the MurCDEF family.

The protein resides in the cytoplasm. It carries out the reaction UDP-N-acetyl-alpha-D-muramate + L-alanine + ATP = UDP-N-acetyl-alpha-D-muramoyl-L-alanine + ADP + phosphate + H(+). The protein operates within cell wall biogenesis; peptidoglycan biosynthesis. In terms of biological role, cell wall formation. This chain is UDP-N-acetylmuramate--L-alanine ligase, found in Clostridium botulinum (strain Okra / Type B1).